The primary structure comprises 278 residues: Large ribosomal subunit protein uL2 (278 aa).

The segment covering 210-219 (RKRWLGKRPQ) has biased composition (basic residues). Residues 210-278 (RKRWLGKRPQ…LIIRHRKGSK (69 aa)) are disordered. Positions 258 to 270 (KTRDVKKASEKLI) are enriched in basic and acidic residues.

It belongs to the universal ribosomal protein uL2 family. In terms of assembly, part of the 50S ribosomal subunit. Forms a bridge to the 30S subunit in the 70S ribosome.

One of the primary rRNA binding proteins. Required for association of the 30S and 50S subunits to form the 70S ribosome, for tRNA binding and peptide bond formation. It has been suggested to have peptidyltransferase activity; this is somewhat controversial. Makes several contacts with the 16S rRNA in the 70S ribosome. The chain is Large ribosomal subunit protein uL2 from Lactobacillus acidophilus (strain ATCC 700396 / NCK56 / N2 / NCFM).